Here is a 658-residue protein sequence, read N- to C-terminus: Transcription factor cep-1 (658 aa).

A DNA-binding region spans residues 238-428; it reads EEWLTFEVKK…RDWKNFCEKR (191 aa). Zn(2+) contacts are provided by Cys319, His322, Cys375, and Cys379. Positions 450 to 477 are disordered; it reads QSSLHSGPSSPEKVTDTSQMFQSTSSSS. Positions 466–476 are enriched in low complexity; that stretch reads TSQMFQSTSSS. Positions 535-564 are required for tertiary structure stability of the protein; sequence QYGLQRQVKLSEKEYSKFVAFFAKEGENEI.

Belongs to the p53 family. As to quaternary structure, homodimer. Interacts (via C-terminus domain) with prmt-5; not methylated by prmt-5. Interacts with cbp-1 (via HAT domain); cep-1 transcriptional activity may be inhibited by interaction with methylated cbp-1. Component of a complex that contains prmt-5 and cbp-1. Interacts with ape-1; the interaction inhibits pro-apoptotic activity of cep-1. Requires Zn(2+) as cofactor. In terms of processing, phosphorylated in response to IR-induced DNA damage which is thought to be mediated by akt-1.

It is found in the nucleus. Functionally, transcriptional activator that binds the same DNA consensus sequence as p53. Has a role in normal development to ensure proper meiotic chromosome segregation. Promotes apoptosis under conditions of cellular and genotoxic stress in response to DNA damage, hypoxia, or starvation. However, not required for DNA repair in response to UV-C or to regulate cell-cycle progression. Regulates germline apoptosis in response to DNA damage. Required for induction of ced-13 in response to DNA damage. Its pro-apoptotic activity is inhibited when bound to ape-1 in vitro. Regulates germline proliferation by activating phg-1. Regulates DNA damage-induced apoptosis by inducing transcription of the programmed cell death activator egl-1. Negatively regulates lifespan. The protein is Transcription factor cep-1 of Caenorhabditis briggsae.